We begin with the raw amino-acid sequence, 226 residues long: ATP-dependent dethiobiotin synthetase BioD (226 aa).

Thr19 is a binding site for Mg(2+). Lys40 is an active-site residue. Mg(2+) is bound by residues Asp53 and Glu114. ATP-binding positions include Asp53, 114 to 117 (EGAG), and 174 to 175 (NR).

Belongs to the dethiobiotin synthetase family. As to quaternary structure, homodimer. It depends on Mg(2+) as a cofactor.

It localises to the cytoplasm. The catalysed reaction is (7R,8S)-7,8-diammoniononanoate + CO2 + ATP = (4R,5S)-dethiobiotin + ADP + phosphate + 3 H(+). Its pathway is cofactor biosynthesis; biotin biosynthesis; biotin from 7,8-diaminononanoate: step 1/2. Catalyzes a mechanistically unusual reaction, the ATP-dependent insertion of CO2 between the N7 and N8 nitrogen atoms of 7,8-diaminopelargonic acid (DAPA, also called 7,8-diammoniononanoate) to form a ureido ring. The sequence is that of ATP-dependent dethiobiotin synthetase BioD from Nitrosospira multiformis (strain ATCC 25196 / NCIMB 11849 / C 71).